The chain runs to 494 residues: Probable malate:quinone oxidoreductase (494 aa).

The protein belongs to the MQO family. It depends on FAD as a cofactor.

The catalysed reaction is (S)-malate + a quinone = a quinol + oxaloacetate. It participates in carbohydrate metabolism; tricarboxylic acid cycle; oxaloacetate from (S)-malate (quinone route): step 1/1. In Kocuria rhizophila (strain ATCC 9341 / DSM 348 / NBRC 103217 / DC2201), this protein is Probable malate:quinone oxidoreductase.